The chain runs to 463 residues: L-seryl-tRNA(Sec) selenium transferase (463 aa).

Lysine 295 carries the N6-(pyridoxal phosphate)lysine modification.

This sequence belongs to the SelA family. In terms of assembly, homodecamer; pentamer of dimers. Binds only one seryl-tRNA(Sec) per dimer. The cofactor is pyridoxal 5'-phosphate.

Its subcellular location is the cytoplasm. The catalysed reaction is L-seryl-tRNA(Sec) + selenophosphate + H(+) = L-selenocysteinyl-tRNA(Sec) + phosphate. It participates in aminoacyl-tRNA biosynthesis; selenocysteinyl-tRNA(Sec) biosynthesis; selenocysteinyl-tRNA(Sec) from L-seryl-tRNA(Sec) (bacterial route): step 1/1. In terms of biological role, converts seryl-tRNA(Sec) to selenocysteinyl-tRNA(Sec) required for selenoprotein biosynthesis. This chain is L-seryl-tRNA(Sec) selenium transferase, found in Escherichia coli (strain SMS-3-5 / SECEC).